The primary structure comprises 475 residues: MEIOTIC F-BOX protein MOF (475 aa).

Residues 1-58 (MRRERDATQIPENPMEGIPQTAAAAAAAAAAEASEPPRKRARVDGGGGGAGEEEEDRL) form a disordered region. Low complexity predominate over residues 22-33 (AAAAAAAAAAEA). An F-box domain is found at 55-91 (EDRLSDLPDCLLEDILAHLGSRQAVQTSVLSRRWRNL).

This sequence belongs to the F-box protein family. FBX subfamily. As to quaternary structure, part of a SCF (SKP1-CUL1-F-box protein) E3 ubiquitin-protein ligase complex. Interacts (via F-box domain) directly with SKP1. In terms of tissue distribution, highly expressed in the stem, leaf and in the anther during meiosis. Weakly expressed in roots and lemma/palea.

It localises to the nucleus. It is found in the chromosome. Its pathway is protein modification; protein ubiquitination. Functionally, probable component of a SCF (SKP1-CULLIN-F-box protein) E3 ubiquitin-protein ligase complex and may function through the ubiquitin-mediated protein degradation or signaling pathway. Required for male meiotic prophase I progression. Required for telomere bouquet formation, homologous chromosome pairing and for the formation of the synaptonemal complex (SC), which stabilizes initial chromosomal axial associations and promotes crossover formation. Involved in meiotic DNA double-strand break (DSB) end-processing and repair, and is important in the recruitment of DSB repair proteins to the DSB sites. The polypeptide is MEIOTIC F-BOX protein MOF (Oryza sativa subsp. japonica (Rice)).